A 472-amino-acid polypeptide reads, in one-letter code: Serine incorporator 3 (472 aa).

Topologically, residues 1–95 (MGAVLGVFSL…KECDVLVRYK (95 aa)) are extracellular. Asn-34 carries an N-linked (GlcNAc...) asparagine glycan. A helical transmembrane segment spans residues 96–116 (AVYRISFALAVFFFAFSLLML). The Cytoplasmic segment spans residues 117–131 (NVKTSKDPRAAIHNG). A helical transmembrane segment spans residues 132–152 (FWFFKIAAIVGVMVGSFYIPG). At 153–158 (GHFNTA) the chain is on the extracellular side. Residues 159-179 (WFVIGMVGAAFFILIQLVLLV) traverse the membrane as a helical segment. Over 180-202 (DFAHSWNESWVNRMEEGNPKCWY) the chain is Cytoplasmic. The chain crosses the membrane as a helical span at residues 203 to 223 (AALLSVTSLFYILSIIFAGLL). Residues 224 to 238 (YTYYTKPDGCTENKF) lie on the Extracellular side of the membrane. The helical transmembrane segment at 239 to 259 (FISFNLILCVVISVLSIHPKI) threads the bilayer. At 260 to 328 (QEHQPRSGLL…APTPAVPLQS (69 aa)) the chain is on the cytoplasmic side. A helical transmembrane segment spans residues 329–349 (GPSLNKENFIGLLVFVLSLSY). The Extracellular portion of the chain corresponds to 350–405 (SSIRNSSNSQVSKLTLSGSDSVILRDTAANGASDEEDGRPRRAVDNEREGVQYNYS). N-linked (GlcNAc...) asparagine glycosylation occurs at Asn-354. Ser-370 carries the post-translational modification Phosphoserine. An N-linked (GlcNAc...) asparagine glycan is attached at Asn-403. Residues 406–426 (MFHLMLCSASLYIMMTLTNWY) form a helical membrane-spanning segment. Over 427-445 (SPDANFQSMTSKWPAVWVK) the chain is Cytoplasmic. Residues 446–466 (ISSSWVCLLLYVWTLVAPLVL) form a helical membrane-spanning segment. The Extracellular segment spans residues 467–472 (TNRDFS).

This sequence belongs to the TDE1 family. Post-translationally, N-glycosylated.

It is found in the cell membrane. Its subcellular location is the golgi apparatus membrane. It carries out the reaction a 1,2-diacyl-sn-glycero-3-phospho-L-serine(in) = a 1,2-diacyl-sn-glycero-3-phospho-L-serine(out). It catalyses the reaction a 1,2-diacyl-sn-glycero-3-phosphocholine(in) = a 1,2-diacyl-sn-glycero-3-phosphocholine(out). The enzyme catalyses a 1,2-diacyl-sn-glycero-3-phosphoethanolamine(in) = a 1,2-diacyl-sn-glycero-3-phosphoethanolamine(out). Functionally, restriction factor required to restrict infectivity of gammaretroviruses: acts by inhibiting an early step of viral infection. Impairs the penetration of the viral particle into the cytoplasm. Non-ATP-dependent, non-specific lipid transporter for phosphatidylserine, phosphatidylcholine, and phosphatidylethanolamine. Functions as a scramblase that flips lipids in both directions across the membrane. Phospholipid scrambling results in gammaretroviral surface exposure of phosphatidylserine and loss of membrane asymmetry, which leads to loss of infectivity. In Bos taurus (Bovine), this protein is Serine incorporator 3 (SERINC3).